Reading from the N-terminus, the 702-residue chain is Translation factor GUF1 homolog, chloroplastic (702 aa).

Low complexity predominate over residues methionine 1–proline 30. Residues methionine 1–asparagine 41 form a disordered region. A tr-type G domain is found at serine 87–proline 283. Residues alanine 96 to serine 103, aspartate 162 to histidine 166, and asparagine 216 to aspartate 219 each bind GTP.

It belongs to the TRAFAC class translation factor GTPase superfamily. Classic translation factor GTPase family. LepA subfamily.

Its subcellular location is the plastid. The protein resides in the chloroplast. It carries out the reaction GTP + H2O = GDP + phosphate + H(+). Promotes chloroplast protein synthesis. May act as a fidelity factor of the translation reaction, by catalyzing a one-codon backward translocation of tRNAs on improperly translocated ribosomes. This Micromonas pusilla (strain CCMP1545) (Picoplanktonic green alga) protein is Translation factor GUF1 homolog, chloroplastic.